A 448-amino-acid polypeptide reads, in one-letter code: Putative flavin-containing monooxygenase FMO GS-OX-like 10 (448 aa).

18-23 (GAGAAG) contacts FAD. 212-217 (GSSVSG) contributes to the NADP(+) binding site.

It belongs to the FMO family. It depends on FAD as a cofactor.

Catalyzes the conversion of methylthioalkyl glucosinolates of any chain length into methylsulfinylalkyl glucosinolates. The polypeptide is Putative flavin-containing monooxygenase FMO GS-OX-like 10 (Arabidopsis thaliana (Mouse-ear cress)).